The following is a 358-amino-acid chain: MAVKRLNDNLLTPVQKRNRKQIQVWLYSILLLCLAIVLVGGATRLTGSGLSITEWKPIHGVIPPIGVEQWQEEFLKYQQITQYKLLNRDMTLSAFKVIFWWEWAHRVLGRLVGLVALLGLIWFWATKRIEKNILFPLIVVPILIAFQGFIGWWMVASGIGQSNLTSVSQYRLAFHLITACLVIIFVTYLSRGLTEYSEKPANQKVQCFAAWLVILVLIEIYLGALVAGLHAGKVYNTWPLMDGQIIPDGLLQHHPYWLNLFENPLTVQFIHRFFAYFLFIVSALHAFYVQKNAPHSTHSRRAFLIFFIIIIQAILGILTLLHEVPISLGLIHQSMALVVLCFAVAHWRATKGAYRAVE.

The next 8 membrane-spanning stretches (helical) occupy residues 22-42 (IQVWLYSILLLCLAIVLVGGA), 107-127 (VLGRLVGLVALLGLIWFWATK), 133-153 (ILFPLIVVPILIAFQGFIGWW), 172-192 (LAFHLITACLVIIFVTYLSRG), 208-228 (FAAWLVILVLIEIYLGALVAG), 269-289 (FIHRFFAYFLFIVSALHAFYV), 302-322 (AFLIFFIIIIQAILGILTLLH), and 324-344 (VPISLGLIHQSMALVVLCFAV). His271 contributes to the heme binding site. His332 serves as a coordination point for heme.

This sequence belongs to the COX15/CtaA family. Type 2 subfamily. Interacts with CtaB. The cofactor is heme b.

It localises to the cell membrane. The enzyme catalyses Fe(II)-heme o + 2 A + H2O = Fe(II)-heme a + 2 AH2. It participates in porphyrin-containing compound metabolism; heme A biosynthesis; heme A from heme O: step 1/1. Functionally, catalyzes the conversion of heme O to heme A by two successive hydroxylations of the methyl group at C8. The first hydroxylation forms heme I, the second hydroxylation results in an unstable dihydroxymethyl group, which spontaneously dehydrates, resulting in the formyl group of heme A. This chain is Heme A synthase, found in Bartonella tribocorum (strain CIP 105476 / IBS 506).